Consider the following 433-residue polypeptide: Histidinol dehydrogenase (433 aa).

Residues Y133, Q194, and N217 each contribute to the NAD(+) site. The substrate site is built by S240, Q262, and H265. Residues Q262 and H265 each contribute to the Zn(2+) site. Residues E330 and H331 each act as proton acceptor in the active site. The substrate site is built by H331, D364, E418, and H423. Zn(2+) is bound at residue D364. H423 contributes to the Zn(2+) binding site.

The protein belongs to the histidinol dehydrogenase family. Zn(2+) serves as cofactor.

It catalyses the reaction L-histidinol + 2 NAD(+) + H2O = L-histidine + 2 NADH + 3 H(+). The protein operates within amino-acid biosynthesis; L-histidine biosynthesis; L-histidine from 5-phospho-alpha-D-ribose 1-diphosphate: step 9/9. Its function is as follows. Catalyzes the sequential NAD-dependent oxidations of L-histidinol to L-histidinaldehyde and then to L-histidine. This is Histidinol dehydrogenase from Dechloromonas aromatica (strain RCB).